Consider the following 428-residue polypeptide: Adenylosuccinate synthetase (428 aa).

Residues 12-18 and 40-42 each bind GTP; these read GDEGKGK and GHT. Asp13 (proton acceptor) is an active-site residue. 2 residues coordinate Mg(2+): Asp13 and Gly40. Residues 13 to 16, 38 to 41, Thr128, Arg142, Gln222, Thr237, and Arg301 contribute to the IMP site; these read DEGK and NAGH. The active-site Proton donor is the His41. A substrate-binding site is contributed by 297–303; that stretch reads VNTGRAR. Residues Arg303, 329 to 331, and 411 to 413 contribute to the GTP site; these read KLD and STS.

It belongs to the adenylosuccinate synthetase family. Homodimer. Mg(2+) serves as cofactor.

The protein resides in the cytoplasm. The catalysed reaction is IMP + L-aspartate + GTP = N(6)-(1,2-dicarboxyethyl)-AMP + GDP + phosphate + 2 H(+). It participates in purine metabolism; AMP biosynthesis via de novo pathway; AMP from IMP: step 1/2. Functionally, plays an important role in the de novo pathway of purine nucleotide biosynthesis. Catalyzes the first committed step in the biosynthesis of AMP from IMP. The chain is Adenylosuccinate synthetase from Caulobacter sp. (strain K31).